The chain runs to 579 residues: Nuclear receptor coactivator 5 (579 aa).

Met-1 is subject to N-acetylmethionine. The segment at 1–78 is disordered; that stretch reads MNTAPSRPSP…LRDHRDSRSV (78 aa). Positions 1-158 are transcription repression; the sequence is MNTAPSRPSP…RDSFDGRGPP (158 aa). A Phosphothreonine modification is found at Thr-3. A phosphoserine mark is found at Ser-9, Ser-21, Ser-24, Ser-29, and Ser-34. Basic and acidic residues-rich tracts occupy residues 11–62 and 68–78; these read TRRD…DLRD and DLRDHRDSRSV. Phosphoserine occurs at positions 96, 116, 126, 143, and 151. A disordered region spans residues 148 to 173; sequence YRDSFDGRGPPGPESQSRAKERLKRE. Over residues 164–173 the composition is skewed to basic and acidic residues; the sequence is SRAKERLKRE. Thr-274 is modified (phosphothreonine). An LXXLL motif motif is present at residues 345–349; the sequence is LINLL. 3 disordered regions span residues 375–428, 444–537, and 560–579; these read MRSS…PTSQ, VTAN…NFDN, and QTTA…QRHY. Ser-378 carries the phosphoserine modification. The residue at position 379 (Thr-379) is a Phosphothreonine. The residue at position 381 (Ser-381) is a Phosphoserine. A compositionally biased stretch (polar residues) spans 395–413; the sequence is SGASLKTQPSSQPLQSGQV. A compositionally biased stretch (low complexity) spans 446–457; that stretch reads ANSSSASPSVAA. Residues 458 to 579 form a transcription activation region; that stretch reads GNTPNQNFST…APMGSYQRHY (122 aa). Polar residues-rich tracts occupy residues 459 to 485 and 520 to 537; these read NTPN…NQPP and SNMT…NFDN.

Binds HTATIP2/TIP30. Interacts with YLPM1. Forms a complex with ILF2, ILF3, YLPM1, KHDRBS1, RBMX and PPP1CA. In terms of tissue distribution, widely expressed.

It localises to the nucleus. In terms of biological role, nuclear receptor coregulator that can have both coactivator and corepressor functions. Interacts with nuclear receptors for steroids (ESR1 and ESR2) independently of the steroid binding domain (AF-2) of the ESR receptors, and with the orphan nuclear receptor NR1D2. Involved in the coactivation of nuclear steroid receptors (ER) as well as the corepression of MYC in response to 17-beta-estradiol (E2). The polypeptide is Nuclear receptor coactivator 5 (NCOA5) (Homo sapiens (Human)).